Consider the following 365-residue polypeptide: MADGGASPAQQEGEMSAAGPGLRRERQHRGSGRPPSARDLQLALAELYEDEAKRQSLRSDKPTTTKMSNSKGLKIDSFRSLRKPERSMSDDKENQRFYSGDSEYRGLQIWGASNNPSKIVAELFKEAKEHGAVPLDEASRTSGDFSKAKSFSGGGYRLGDSSQKHSEYIYGENQDVQILLKLWRNGFSLDDGELRSYSDPINAQFLESVKRGEIPVDLQRLVHGGQVNLDMEDHQEQEYVKPRLRFKAFSGEGQKLGSLTPEIVSTPSSPEEEDKSILNAPVLIDDSVPATKIQIRLADGSRLIQRFNQTHRIKDIRDFIIQSRPAFATTDFVLVTTFPNKELTDESLTLREADILNTVILQQLK.

The interval 1–97 (MADGGASPAQ…MSDDKENQRF (97 aa)) is disordered. Basic and acidic residues-rich tracts occupy residues 50–63 (DEAKRQSLRSDKPT) and 73–95 (LKIDSFRSLRKPERSMSDDKENQ). The 66-residue stretch at 175–240 (DVQILLKLWR…MEDHQEQEYV (66 aa)) folds into the SEP domain. Residues 286 to 363 (DSVPATKIQI…DILNTVILQQ (78 aa)) enclose the UBX domain.

The protein belongs to the NSFL1C family.

The protein resides in the nucleus. Its subcellular location is the cytoplasm. It localises to the cytosol. It is found in the endoplasmic reticulum. The protein localises to the golgi apparatus. The protein resides in the cytoskeleton. Its subcellular location is the microtubule organizing center. It localises to the centrosome. Its function is as follows. Adapter protein required for Golgi and endoplasmic reticulum biogenesis. Involved in Golgi and endoplasmic reticulum maintenance during interphase and in their reassembly at the end of mitosis. Regulates the centrosomal levels of kinase AURKA/Aurora A during mitotic progression by promoting AURKA removal from centrosomes in prophase. Also, regulates spindle orientation during mitosis. The sequence is that of UBX domain-containing protein 2B (UBXN2B) from Gallus gallus (Chicken).